The chain runs to 783 residues: LPS-assembly protein LptD (783 aa).

An N-terminal signal peptide occupies residues 1-24; sequence MSCFSRTFLAASISAALFAPQIQA.

This sequence belongs to the LptD family. As to quaternary structure, component of the lipopolysaccharide transport and assembly complex. Interacts with LptE and LptA.

It localises to the cell outer membrane. In terms of biological role, together with LptE, is involved in the assembly of lipopolysaccharide (LPS) at the surface of the outer membrane. This chain is LPS-assembly protein LptD, found in Vibrio cholerae serotype O1 (strain ATCC 39315 / El Tor Inaba N16961).